The primary structure comprises 1528 residues: MDSYFKAAVSGLDKLLDDFEQNPDKQDYLPDAYAFNQCSVSSESASPQLALLSKDQRCISTCASSEACCEDANETFLEGKIHEGLTSRPNEKNVAGLDLLSSVDASTSDEIQPSCMRRCSKPVCDLISDMGNLVHATNSEEDIKQLLPDDPKSSADTLITLDSSSVSEALTVSSVDCGSNAVREEQNNINAGIKNRDISIKELGVKVDMALFDSCKYNRTENLKDKIISNELETVDFDMPSVLMEQSSEMSNTKDNPQYKRLPCELLKDDGCLAEEKVAVAVNNTECLEEGGGSNTIAMPCKLPENEGISPSDPASKDENFKLPDFPLQENRTSVFMKQTVKEDSRNLDLKDNNDIVHVSGDDVPPSLSCLSLSGSLCGSLIHNNEHSDILPPNESEGQNNDAVTIHEEIQKSDVLDGETDLSKKETCRSIFLQPVNEKKGEGKVEVEEMVISGESLESPEDASSAAAAGSPVALSAASVPEAPGPCEGLTFPSSDMDGQELDYFNIDESMRSGILISDAELDAFLKEQCLSNSNTMSAGENVNDSQLQMNQITMKGLHDENAGDIYFNAEAGAAGENGGVGNCETSDKENTENNGLSIGEKGAIPTERELSACQPDIRDELPVPSIKTQAVGGARPKQLLSLPPGTRSSKELNKPDVVDVPESEPCTANATAVSTCSADHIPDSQVSFNSNYIDIESNFEDGSSFVTANKDSLPENKRKESLVLGQKQPTWVPDSEAPNCMNCQVKFTFTKRRHHCRACGKVFCGVCCNRKCKLQYLEKEARVCVICYETINKAQAFERMMSPGGSCLKSNHSNECATDQPLQETQTSSTPSPTTLPISALKQPNVEGPCSKEQKRVWFADGILPNGEVADTTKLSSGSKRCSDDFSPVLPDVPTMINKVDRTHSPTVEKPNNGLGDIIRSEISQSPTCHTAPVERLPGNTGTEGLPMPGPFTLEDDVFVDSEEPSTPTVVPANSGLPVASISDYRLLCSVAKCVCNNISLLPDDDIGLPPLLATSGEDGSVPVVQERPSHEQIILLLEGEGFPPATFVLNANLLVNVKLVLYSSEKYWYFSTNGLHGLGQAEIIVLLQCLPNEDTVPKDIFRLFITIYKDALKGKYIENLDNLTFTESFLNSKDHGGFLFITPTFQNLDGLPVPRSPFLCGILIQKLEIPWAKVFPMRLMLRLGAEYKAYPAPLTSVRGRKPLFGEIGHTIMNLLVDLRNYQYTLHNIDQLLIHMEMGKSCIKIPRKKYSDVMKVIHSSNEHVISIGASFSTEADSHLVCVQSDGVYQTQANSATGQPRKVTGASFVVFNGALKTSSGFLAKSSIVEDGLMVQITPETMEGLRLALREQKDFRIQCGKVDAVDLREYVDICWVDSEERKNKGVISSVDGMSVEGFPSEKIKLETDFETEEKTVKCTEVFYFLKDQDISILSSSYQFAKEIAVACSAALCPHLRTLKSNRMNKIGLRVSIDTDMVEFQAGCEGQLLPQHYLNDLDSALIPVIHGGTSNSSLPLEIELAFFILENLSE.

Serine 120 is subject to Phosphoserine. The segment at 629–664 (TQAVGGARPKQLLSLPPGTRSSKELNKPDVVDVPES) is disordered. Basic and acidic residues predominate over residues 649 to 658 (SSKELNKPDV). The FYVE-type zinc-finger motif lies at 735 to 793 (DSEAPNCMNCQVKFTFTKRRHHCRACGKVFCGVCCNRKCKLQYLEKEARVCVICYETIN). Residues cysteine 741, cysteine 744, cysteine 757, cysteine 760, cysteine 765, cysteine 768, cysteine 785, and cysteine 788 each coordinate Zn(2+). Residues serine 803, serine 833, serine 884, and serine 927 each carry the phosphoserine modification. A disordered region spans residues 819–849 (TDQPLQETQTSSTPSPTTLPISALKQPNVEG). The segment covering 821–838 (QPLQETQTSSTPSPTTLP) has biased composition (low complexity). The interval 928-949 (PTCHTAPVERLPGNTGTEGLPM) is disordered.

In terms of assembly, interacts (via C-terminus) with TOM1 (via C-terminus); interaction is required to target TOM1 to endosomes. Does not interact with TOM1L1 or TOM1L2.

The protein resides in the cytoplasm. Its subcellular location is the early endosome membrane. May be involved in regulating membrane trafficking in the endosomal pathway. Overexpression induces endosome aggregation. Required to target TOM1 to endosomes. The protein is Zinc finger FYVE domain-containing protein 16 (Zfyve16) of Mus musculus (Mouse).